The primary structure comprises 222 residues: Phosphoglycolate phosphatase (222 aa).

Aspartate 12 acts as the Nucleophile in catalysis. Mg(2+) contacts are provided by aspartate 12, aspartate 14, and aspartate 175.

This sequence belongs to the HAD-like hydrolase superfamily. CbbY/CbbZ/Gph/YieH family. It depends on Mg(2+) as a cofactor.

The catalysed reaction is 2-phosphoglycolate + H2O = glycolate + phosphate. It functions in the pathway organic acid metabolism; glycolate biosynthesis; glycolate from 2-phosphoglycolate: step 1/1. Functionally, specifically catalyzes the dephosphorylation of 2-phosphoglycolate. Is involved in the dissimilation of the intracellular 2-phosphoglycolate formed during the DNA repair of 3'-phosphoglycolate ends, a major class of DNA lesions induced by oxidative stress. The sequence is that of Phosphoglycolate phosphatase from Chromobacterium violaceum (strain ATCC 12472 / DSM 30191 / JCM 1249 / CCUG 213 / NBRC 12614 / NCIMB 9131 / NCTC 9757 / MK).